The chain runs to 384 residues: tRNA(Met) cytidine acetate ligase (384 aa).

Residues 7–20 (VAEY…HEFL), Gly101, Asn153, and Arg178 each bind ATP.

The protein belongs to the TmcAL family.

It localises to the cytoplasm. It catalyses the reaction cytidine(34) in elongator tRNA(Met) + acetate + ATP = N(4)-acetylcytidine(34) in elongator tRNA(Met) + AMP + diphosphate. Its function is as follows. Catalyzes the formation of N(4)-acetylcytidine (ac(4)C) at the wobble position of elongator tRNA(Met), using acetate and ATP as substrates. First activates an acetate ion to form acetyladenylate (Ac-AMP) and then transfers the acetyl group to tRNA to form ac(4)C34. The sequence is that of tRNA(Met) cytidine acetate ligase from Lactobacillus delbrueckii subsp. bulgaricus (strain ATCC 11842 / DSM 20081 / BCRC 10696 / JCM 1002 / NBRC 13953 / NCIMB 11778 / NCTC 12712 / WDCM 00102 / Lb 14).